Here is a 95-residue protein sequence, read N- to C-terminus: Basic phospholipase A2 (95 aa).

Residues Lys-7 and Lys-10 are each lipidated (N6-palmitoyl lysine). Ca(2+) is bound by residues Tyr-23, Gly-25, and Gly-27. 5 cysteine pairs are disulfide-bonded: Cys-24-Cys-40, Cys-39-Cys-77, Cys-46-Cys-70, Cys-53-Cys-63, and Cys-57-Cys-68. Residue His-43 is part of the active site. Asp-44 is a binding site for Ca(2+). Asp-71 is an active-site residue.

Monomer. It depends on Ca(2+) as a cofactor. Expressed by the venom gland.

It localises to the secreted. It carries out the reaction a 1,2-diacyl-sn-glycero-3-phosphocholine + H2O = a 1-acyl-sn-glycero-3-phosphocholine + a fatty acid + H(+). Its function is as follows. PLA2 catalyzes the calcium-dependent hydrolysis of the 2-acyl groups in 3-sn-phosphoglycerides. Induces local and systemic myotoxicity in an intramuscular mouse model. Induces local edema in a mouse footpad assay. Does not exhibit any anticoagulant effects. Does not mediate an antibacterial effect against Gram-negative and Gram-positive bacteria. This is Basic phospholipase A2 from Agkistrodon piscivorus leucostoma (Western cottonmouth).